Consider the following 423-residue polypeptide: UPF0229 protein VP0986 (423 aa).

The segment at 69-112 is disordered; sequence GGVRERVHPGNDQFITGDKIERPKGGGQGSGSGEGNASPDGEGQ. Positions 93–102 are enriched in gly residues; that stretch reads GGGQGSGSGE.

It belongs to the UPF0229 family.

In Vibrio parahaemolyticus serotype O3:K6 (strain RIMD 2210633), this protein is UPF0229 protein VP0986.